We begin with the raw amino-acid sequence, 307 residues long: Chaperone protein DnaJ 2 (307 aa).

A J domain is found at 6–71 (NYYQILGVPR…TKRRELDSRL (66 aa)). Residues 69 to 133 (SRLFGRFRRP…TRRTKVVSPA (65 aa)) are disordered. Polar residues predominate over residues 88–99 (NGGRSPNGTSVN). Residues 100 to 114 (GQVRTPTGRTGTRQP) show a composition bias toward low complexity.

Belongs to the DnaJ family. As to quaternary structure, homodimer. Zn(2+) is required as a cofactor.

Its subcellular location is the cytoplasm. Its function is as follows. Participates actively in the response to hyperosmotic and heat shock by preventing the aggregation of stress-denatured proteins and by disaggregating proteins, also in an autonomous, DnaK-independent fashion. Unfolded proteins bind initially to DnaJ; upon interaction with the DnaJ-bound protein, DnaK hydrolyzes its bound ATP, resulting in the formation of a stable complex. GrpE releases ADP from DnaK; ATP binding to DnaK triggers the release of the substrate protein, thus completing the reaction cycle. Several rounds of ATP-dependent interactions between DnaJ, DnaK and GrpE are required for fully efficient folding. Also involved, together with DnaK and GrpE, in the DNA replication of plasmids through activation of initiation proteins. In Synechocystis sp. (strain ATCC 27184 / PCC 6803 / Kazusa), this protein is Chaperone protein DnaJ 2 (dnaJ2).